The following is a 293-amino-acid chain: Ribosomal protein L11 methyltransferase (293 aa).

T145, G166, D188, and N230 together coordinate S-adenosyl-L-methionine.

It belongs to the methyltransferase superfamily. PrmA family.

The protein resides in the cytoplasm. It carries out the reaction L-lysyl-[protein] + 3 S-adenosyl-L-methionine = N(6),N(6),N(6)-trimethyl-L-lysyl-[protein] + 3 S-adenosyl-L-homocysteine + 3 H(+). Its function is as follows. Methylates ribosomal protein L11. This chain is Ribosomal protein L11 methyltransferase, found in Serratia proteamaculans (strain 568).